The chain runs to 309 residues: Taste receptor type 2 member 31 (309 aa).

Topologically, residues 1–2 (MT) are extracellular. A helical membrane pass occupies residues 3 to 23 (TFIPIIFSSLVVVIFVIGNFA). Topologically, residues 24–55 (NGFIALVNSIEWFKRQKISFADQILTALAVSR) are cytoplasmic. Residues 56 to 76 (VGLLWVLLLNWYSTVLNPAFY) form a helical membrane-spanning segment. The Extracellular portion of the chain corresponds to 77-100 (SVEVRTTAYNVWAVTGHFSNWLAT). The helical transmembrane segment at 101 to 121 (SLSIFYLLKIANFSNLIFLHL) threads the bilayer. The Cytoplasmic portion of the chain corresponds to 122-126 (KRRVK). Residues 127–147 (SVILVMLLGPLLFLACQLFMI) form a helical membrane-spanning segment. The Extracellular portion of the chain corresponds to 148–181 (NMKEIVRTKEYEGNMTWKIKLRSAVYLSDATVTT). Asparagine 161 carries N-linked (GlcNAc...) asparagine glycosylation. The helical transmembrane segment at 182–202 (LGNLVPFTLTLLCFLLLICSL) threads the bilayer. The Cytoplasmic portion of the chain corresponds to 203-229 (CKHLKKMQLHGKGSQDPSTKVHIKVLQ). A helical transmembrane segment spans residues 230–250 (TVISFLLLCAIYFLSIMISVW). Topologically, residues 251 to 259 (SFGSLKNKP) are extracellular. A helical transmembrane segment spans residues 260–280 (VFMFCKAMRFSYPSIHPFILI). The Cytoplasmic portion of the chain corresponds to 281 to 309 (WGNKKLKQTFLSVLRQVRYWVKGEKPSSP).

The protein belongs to the G-protein coupled receptor T2R family.

The protein localises to the membrane. Functionally, receptor that may play a role in the perception of bitterness and is gustducin-linked. May play a role in sensing the chemical composition of the gastrointestinal content. The activity of this receptor may stimulate alpha gustducin, mediate PLC-beta-2 activation and lead to the gating of TRPM5. The chain is Taste receptor type 2 member 31 (TAS2R31) from Pan troglodytes (Chimpanzee).